Consider the following 222-residue polypeptide: Cytochrome b6 (222 aa).

Residues 39 to 59 (IFYCLGGITLTCFIIQFATGF) form a helical membrane-spanning segment. Residue Cys42 participates in heme c binding. Residues His93 and His107 each contribute to the heme b site. A run of 3 helical transmembrane segments spans residues 97-117 (ASMMVLMMILHIFRVYLTGGF), 123-143 (LTWITGVIMATITVSFGVTGY), and 193-213 (LHTFVLPWLIAVFMLAHFLMI). Heme b-binding residues include His194 and His209.

It belongs to the cytochrome b family. PetB subfamily. In terms of assembly, the 4 large subunits of the cytochrome b6-f complex are cytochrome b6, subunit IV (17 kDa polypeptide, PetD), cytochrome f and the Rieske protein, while the 4 small subunits are PetG, PetL, PetM and PetN. The complex functions as a dimer. Heme b is required as a cofactor. Requires heme c as cofactor.

The protein resides in the cellular thylakoid membrane. Its function is as follows. Component of the cytochrome b6-f complex, which mediates electron transfer between photosystem II (PSII) and photosystem I (PSI), cyclic electron flow around PSI, and state transitions. This chain is Cytochrome b6 (petB), found in Picosynechococcus sp. (strain ATCC 27264 / PCC 7002 / PR-6) (Agmenellum quadruplicatum).